A 1729-amino-acid chain; its full sequence is RNA-directed RNA polymerase (1729 aa).

The region spanning 59 to 232 (HPMSLAVHPH…FHEPWQLYWL (174 aa)) is the Alphavirus-like MT domain. Disordered stretches follow at residues 528 to 619 (NSNA…TPSP) and 635 to 663 (STSR…TLGR). 2 stretches are compositionally biased toward polar residues: residues 538 to 567 (QQDQ…TNSV) and 586 to 617 (FPTT…SVTP). Positions 635–652 (STSRASSPSPRRTVVSPR) are enriched in low complexity. In terms of domain architecture, Fe2OG dioxygenase spans 741-834 (SYDHCLIQRY…RVSITFRNKT (94 aa)). His-759, Asp-761, and His-816 together coordinate Fe cation. Arg-825 contributes to the 2-oxoglutarate binding site. The disordered stretch occupies residues 841 to 862 (SAPDMNPVEQPGASAGQLTGPL). The 155-residue stretch at 957 to 1111 (LQNADLTWKT…VFKQYCGYYI (155 aa)) folds into the (+)RNA virus helicase ATP-binding domain. Positions 1112–1247 (NCTHRNKQDL…VITERAAAET (136 aa)) constitute a (+)RNA virus helicase C-terminal domain. Residues 1492 to 1599 (RPAFASDFEA…DQVPVEKTGF (108 aa)) form the RdRp catalytic domain.

The protein belongs to the potexvirus/carlavirus RNA replication protein family. Fe(2+) serves as cofactor.

The catalysed reaction is RNA(n) + a ribonucleoside 5'-triphosphate = RNA(n+1) + diphosphate. The enzyme catalyses ATP + H2O = ADP + phosphate + H(+). In terms of biological role, RNA replication. The central part of this protein possibly functions as an ATP-binding helicase. In Lolium latent virus (isolate Lolium/USA/US1/-) (LoLV), this protein is RNA-directed RNA polymerase (ORF1).